We begin with the raw amino-acid sequence, 86 residues long: Acyl-CoA-binding protein homolog (86 aa).

The region spanning 2–86 is the ACB domain; it reads VSEQFNAAAE…FVEGLVAKYA (85 aa). An acyl-CoA is bound by residues K14, 29–33, K51, K55, and Y74; that span reads YALFK.

It belongs to the ACBP family. In terms of tissue distribution, expressed in larval and pupal brains. In adults, expressed in cardia, part of the Malpighian tubules, fat body, and gametes of both sexes.

Its function is as follows. Binds medium- and long-chain acyl-CoA esters with very high affinity and may function as an intracellular carrier of acyl-CoA esters. May be involved in energy metabolism in a manner that depends on the substrate used for energy production. Dbi and its metabolites are involved in the regulation of multiple biological processes. This chain is Acyl-CoA-binding protein homolog, found in Drosophila melanogaster (Fruit fly).